Here is a 59-residue protein sequence, read N- to C-terminus: Large ribosomal subunit protein uL30 (59 aa).

This sequence belongs to the universal ribosomal protein uL30 family. Part of the 50S ribosomal subunit.

In Rhodococcus jostii (strain RHA1), this protein is Large ribosomal subunit protein uL30.